We begin with the raw amino-acid sequence, 402 residues long: uncharacterized protein (402 aa).

Positions 332–402 (MFSSSSSSSE…PEPPPGKPGR (71 aa)) are disordered. Polar residues predominate over residues 370–379 (SETTSLQQYS). The span at 393–402 (PEPPPGKPGR) shows a compositional bias: pro residues.

This is an uncharacterized protein from Mus musculus (Mouse).